A 440-amino-acid polypeptide reads, in one-letter code: Cell division protein DivIB (440 aa).

Positions 1–10 are enriched in basic and acidic residues; that stretch reads MMDDKTKNDQ. Disordered stretches follow at residues 1–97 and 123–154; these read MMDD…DSNI and QHQS…TQLK. Topologically, residues 1–174 are cytoplasmic; sequence MMDDKTKNDQ…RRKRQKRIQY (174 aa). A compositionally biased stretch (acidic residues) spans 12–21; the sequence is ESNEDKDELE. Over residues 27–39 the composition is skewed to basic residues; that stretch reads TSKKRRQRKRSKA. The segment covering 78–87 has biased composition (low complexity); it reads DSASSHANDN. The span at 88-97 shows a compositional bias: acidic residues; that stretch reads NIDDSTDSNI. A compositionally biased stretch (polar residues) spans 124 to 134; sequence HQSAPNEQNSD. The helical transmembrane segment at 175–195 threads the bilayer; it reads SVITILVLLIAVILIYMFSPL. In terms of domain architecture, POTRA spans 196 to 264; the sequence is SKIAHVNING…NTLNVDITEN (69 aa). Topologically, residues 196–440 are extracellular; it reads SKIAHVNING…KINKQSSKNN (245 aa). The disordered stretch occupies residues 397–440; sequence YRGNTSTQSESDKNVTKSSQEENQAKEELQSVLNKINKQSSKNN. Positions 406-425 are enriched in basic and acidic residues; it reads ESDKNVTKSSQEENQAKEEL. Positions 427-440 are enriched in polar residues; that stretch reads SVLNKINKQSSKNN.

This sequence belongs to the FtsQ/DivIB family. DivIB subfamily.

Its subcellular location is the cell membrane. Cell division protein that may be involved in stabilizing or promoting the assembly of the division complex. This chain is Cell division protein DivIB, found in Staphylococcus aureus (strain MRSA252).